The primary structure comprises 276 residues: CTD small phosphatase-like protein (276 aa).

Positions 1 to 25 (MDGPAIITQVTNPKEDEGRLPGAGE) are disordered. The FCP1 homology domain occupies 102-260 (LDYGKKCVVI…LDLIPFFEGL (159 aa)). The active-site 4-aspartylphosphate intermediate is aspartate 112. Mg(2+) contacts are provided by aspartate 112, aspartate 114, and asparagine 223. The Proton donor role is filled by aspartate 114.

In terms of assembly, interacts with REST. Monomer. Mg(2+) serves as cofactor. In terms of tissue distribution, expression is restricted to non-neuronal tissues.

The protein resides in the nucleus. The catalysed reaction is O-phospho-L-seryl-[protein] + H2O = L-seryl-[protein] + phosphate. It carries out the reaction O-phospho-L-threonyl-[protein] + H2O = L-threonyl-[protein] + phosphate. Its function is as follows. Recruited by REST to neuronal genes that contain RE-1 elements, leading to neuronal gene silencing in non-neuronal cells. Preferentially catalyzes the dephosphorylation of 'Ser-5' within the tandem 7 residue repeats in the C-terminal domain (CTD) of the largest RNA polymerase II subunit POLR2A. Negatively regulates RNA polymerase II transcription, possibly by controlling the transition from initiation/capping to processive transcript elongation. This Homo sapiens (Human) protein is CTD small phosphatase-like protein (CTDSPL).